A 114-amino-acid polypeptide reads, in one-letter code: Large ribosomal subunit protein uL22 (114 aa).

This sequence belongs to the universal ribosomal protein uL22 family. Part of the 50S ribosomal subunit.

Functionally, this protein binds specifically to 23S rRNA; its binding is stimulated by other ribosomal proteins, e.g. L4, L17, and L20. It is important during the early stages of 50S assembly. It makes multiple contacts with different domains of the 23S rRNA in the assembled 50S subunit and ribosome. Its function is as follows. The globular domain of the protein is located near the polypeptide exit tunnel on the outside of the subunit, while an extended beta-hairpin is found that lines the wall of the exit tunnel in the center of the 70S ribosome. The sequence is that of Large ribosomal subunit protein uL22 from Desulfitobacterium hafniense (strain Y51).